We begin with the raw amino-acid sequence, 367 residues long: Cytochrome b (367 aa).

Transmembrane regions (helical) follow at residues 20-40 (MGSI…LLSM), 64-85 (WFLR…YAHI), 101-121 (WMVG…GYVL), and 166-186 (FFSL…LHII). Positions 70 and 84 each coordinate heme b. 2 residues coordinate heme b: His170 and His184. A ubiquinone is bound at residue His189. Transmembrane regions (helical) follow at residues 214–234 (IKDS…TFFS), 276–296 (LGGV…PLSS), 308–328 (IYQV…WLGA), and 335–355 (YLSL…LLGM).

The protein belongs to the cytochrome b family. The main subunits of complex b-c1 are: cytochrome b, cytochrome c1 and the Rieske protein. It depends on heme b as a cofactor.

Its subcellular location is the mitochondrion inner membrane. In terms of biological role, component of the ubiquinol-cytochrome c reductase complex (complex III or cytochrome b-c1 complex) that is part of the mitochondrial respiratory chain. The b-c1 complex mediates electron transfer from ubiquinol to cytochrome c. Contributes to the generation of a proton gradient across the mitochondrial membrane that is then used for ATP synthesis. This is Cytochrome b (MT-CYB) from Albinaria caerulea (Land snail).